The primary structure comprises 391 residues: Polyketide synthase 1 (391 aa).

Cys-164 is a catalytic residue.

It belongs to the thiolase-like superfamily. Chalcone/stilbene synthases family. In terms of assembly, homodimer. As to expression, expressed in fruits.

It catalyses the reaction (E)-4-coumaroyl-CoA + 3 malonyl-CoA + 3 H(+) = 2',4,4',6'-tetrahydroxychalcone + 3 CO2 + 4 CoA. Its pathway is secondary metabolite biosynthesis; flavonoid biosynthesis. In terms of biological role, polyketide synthase producing naringenin chalcone and slightly p-coumaryltriacetic acid lactone (CTAL). Can use p-coumaryl-CoA as substrate. The sequence is that of Polyketide synthase 1 (PKS1) from Rubus idaeus (Raspberry).